A 429-amino-acid chain; its full sequence is Ribosomal RNA small subunit methyltransferase B (429 aa).

S-adenosyl-L-methionine is bound by residues 254–260 (CAAPGGK), D277, D303, and D322. C375 (nucleophile) is an active-site residue.

This sequence belongs to the class I-like SAM-binding methyltransferase superfamily. RsmB/NOP family.

Its subcellular location is the cytoplasm. It carries out the reaction cytidine(967) in 16S rRNA + S-adenosyl-L-methionine = 5-methylcytidine(967) in 16S rRNA + S-adenosyl-L-homocysteine + H(+). Its function is as follows. Specifically methylates the cytosine at position 967 (m5C967) of 16S rRNA. The sequence is that of Ribosomal RNA small subunit methyltransferase B from Shigella boydii serotype 18 (strain CDC 3083-94 / BS512).